Consider the following 114-residue polypeptide: T cell receptor beta variable 27 (114 aa).

A signal peptide spans 1 to 21; sequence MGPQLLGYVVLCLLGAGPLEA. The 93-residue stretch at 22 to 114 folds into the Ig-like domain; it reads QVTQNPRYLI…TSLYFCASSL (93 aa). A disulfide bridge links Cys42 with Cys110. A glycan (N-linked (GlcNAc...) asparagine) is linked at Asn103.

In terms of assembly, alpha-beta TR is a heterodimer composed of an alpha and beta chain; disulfide-linked. The alpha-beta TR is associated with the transmembrane signaling CD3 coreceptor proteins to form the TR-CD3 (TcR or TCR). The assembly of alpha-beta TR heterodimers with CD3 occurs in the endoplasmic reticulum where a single alpha-beta TR heterodimer associates with one CD3D-CD3E heterodimer, one CD3G-CD3E heterodimer and one CD247 homodimer forming a stable octameric structure. CD3D-CD3E and CD3G-CD3E heterodimers preferentially associate with TR alpha and TR beta chains, respectively. The association of the CD247 homodimer is the last step of TcR assembly in the endoplasmic reticulum and is required for transport to the cell surface.

The protein localises to the cell membrane. Its function is as follows. V region of the variable domain of T cell receptor (TR) beta chain that participates in the antigen recognition. Alpha-beta T cell receptors are antigen specific receptors which are essential to the immune response and are present on the cell surface of T lymphocytes. Recognize peptide-major histocompatibility (MH) (pMH) complexes that are displayed by antigen presenting cells (APC), a prerequisite for efficient T cell adaptive immunity against pathogens. Binding of alpha-beta TR to pMH complex initiates TR-CD3 clustering on the cell surface and intracellular activation of LCK that phosphorylates the ITAM motifs of CD3G, CD3D, CD3E and CD247 enabling the recruitment of ZAP70. In turn ZAP70 phosphorylates LAT, which recruits numerous signaling molecules to form the LAT signalosome. The LAT signalosome propagates signal branching to three major signaling pathways, the calcium, the mitogen-activated protein kinase (MAPK) kinase and the nuclear factor NF-kappa-B (NF-kB) pathways, leading to the mobilization of transcription factors that are critical for gene expression and essential for T cell growth and differentiation. The T cell repertoire is generated in the thymus, by V-(D)-J rearrangement. This repertoire is then shaped by intrathymic selection events to generate a peripheral T cell pool of self-MH restricted, non-autoaggressive T cells. Post-thymic interaction of alpha-beta TR with the pMH complexes shapes TR structural and functional avidity. This is T cell receptor beta variable 27 from Homo sapiens (Human).